The chain runs to 336 residues: DNA polymerase beta (336 aa).

The K(+) site is built by Lys59, Leu61, and Val64. Residues Lys59, Leu61, and Val64 each contribute to the Na(+) site. The active-site Nucleophile; Schiff-base intermediate with DNA; for 5'-dRP lyase activity is the Lys71. The residue at position 82 (Arg82) is an Omega-N-methylarginine; by PRMT6. Thr100, Val102, and Ile105 together coordinate K(+). Na(+) contacts are provided by Thr100, Val102, and Ile105. A 2'-deoxyribonucleoside 5'-triphosphate is bound at residue Arg148. Omega-N-methylarginine; by PRMT6 is present on Arg151. Ser179, Arg182, Gly188, and Asp189 together coordinate a 2'-deoxyribonucleoside 5'-triphosphate. Positions 182-191 are DNA-binding; sequence RGAESSGDID. Mg(2+) contacts are provided by Asp189, Asp191, and Asp257.

It belongs to the DNA polymerase type-X family. Requires Mg(2+) as cofactor. Methylation by PRMT6 stimulates the polymerase activity by enhancing DNA binding and processivity. Post-translationally, ubiquitinated: monoubiquitinated by huwe1/arf-bp1. Monoubiquitinated protein is then the target of stub1/chip, which catalyzes polyubiquitination from monoubiquitin, leading to degradation by the proteasome. usp47 mediates the deubiquitination of monoubiquitinated protein, preventing polyubiquitination by STUB1/CHIP and its subsequent degradation.

It localises to the nucleus. The protein localises to the cytoplasm. It carries out the reaction DNA(n) + a 2'-deoxyribonucleoside 5'-triphosphate = DNA(n+1) + diphosphate. The catalysed reaction is a 5'-end 2'-deoxyribose-2'-deoxyribonucleotide-DNA = (2E,4S)-4-hydroxypenten-2-al-5-phosphate + a 5'-end 5'-phospho-2'-deoxyribonucleoside-DNA + H(+). The enzyme catalyses 2'-deoxyribonucleotide-(2'-deoxyribose 5'-phosphate)-2'-deoxyribonucleotide-DNA = a 3'-end 2'-deoxyribonucleotide-(2,3-dehydro-2,3-deoxyribose 5'-phosphate)-DNA + a 5'-end 5'-phospho-2'-deoxyribonucleoside-DNA + H(+). Functionally, repair polymerase that plays a key role in base-excision repair. During this process, the damaged base is excised by specific DNA glycosylases, the DNA backbone is nicked at the abasic site by an apurinic/apyrimidic (AP) endonuclease, and POLB removes 5'-deoxyribose-phosphate from the preincised AP site acting as a 5'-deoxyribose-phosphate lyase (5'-dRP lyase); through its DNA polymerase activity, it adds one nucleotide to the 3' end of the arising single-nucleotide gap. Conducts 'gap-filling' DNA synthesis in a stepwise distributive fashion rather than in a processive fashion as for other DNA polymerases. It is also able to cleave sugar-phosphate bonds 3' to an intact AP site, acting as an AP lyase. This is DNA polymerase beta (polb) from Danio rerio (Zebrafish).